We begin with the raw amino-acid sequence, 168 residues long: Small ribosomal subunit protein uS8 (168 aa).

The segment at 59 to 93 (EEYKKMKELAEKSPNPKMKRYLKQLEEYNKGTQYP) is not found in other S8 sequences.

This sequence belongs to the universal ribosomal protein uS8 family. Part of the 30S ribosomal subunit. Contacts proteins S5 and S12.

Its function is as follows. One of the primary rRNA binding proteins, it binds directly to 16S rRNA central domain where it helps coordinate assembly of the platform of the 30S subunit. The chain is Small ribosomal subunit protein uS8 from Aquifex aeolicus (strain VF5).